The chain runs to 249 residues: SRR1-like protein (249 aa).

A disordered region spans residues 1 to 40 (MAAAALEPWSAVAPRRRKRAAGRRPRPGEGPRAEPEADGE). Positions 14 to 25 (PRRRKRAAGRRP) are enriched in basic residues. The span at 26-40 (RPGEGPRAEPEADGE) shows a compositional bias: basic and acidic residues.

The protein belongs to the SRR1 family.

It is found in the cytoplasm. Its function is as follows. Plays a role in the regulation of heme biosynthesis and in the regulation of the expression of core clock genes. This chain is SRR1-like protein (Srrd), found in Mus musculus (Mouse).